A 317-amino-acid chain; its full sequence is 4-hydroxy-3-methylbut-2-enyl diphosphate reductase (317 aa).

Residue Cys-12 coordinates [4Fe-4S] cluster. Residues His-41 and His-74 each coordinate (2E)-4-hydroxy-3-methylbut-2-enyl diphosphate. Positions 41 and 74 each coordinate dimethylallyl diphosphate. The isopentenyl diphosphate site is built by His-41 and His-74. Cys-97 serves as a coordination point for [4Fe-4S] cluster. His-125 contacts (2E)-4-hydroxy-3-methylbut-2-enyl diphosphate. Residue His-125 coordinates dimethylallyl diphosphate. Position 125 (His-125) interacts with isopentenyl diphosphate. The active-site Proton donor is the Glu-127. Residue Thr-168 participates in (2E)-4-hydroxy-3-methylbut-2-enyl diphosphate binding. Cys-198 contributes to the [4Fe-4S] cluster binding site. Ser-226, Ser-227, Asn-228, and Ser-270 together coordinate (2E)-4-hydroxy-3-methylbut-2-enyl diphosphate. Ser-226, Ser-227, Asn-228, and Ser-270 together coordinate dimethylallyl diphosphate. Positions 226, 227, 228, and 270 each coordinate isopentenyl diphosphate.

It belongs to the IspH family. Homodimer. The cofactor is [4Fe-4S] cluster.

The enzyme catalyses isopentenyl diphosphate + 2 oxidized [2Fe-2S]-[ferredoxin] + H2O = (2E)-4-hydroxy-3-methylbut-2-enyl diphosphate + 2 reduced [2Fe-2S]-[ferredoxin] + 2 H(+). The catalysed reaction is dimethylallyl diphosphate + 2 oxidized [2Fe-2S]-[ferredoxin] + H2O = (2E)-4-hydroxy-3-methylbut-2-enyl diphosphate + 2 reduced [2Fe-2S]-[ferredoxin] + 2 H(+). It functions in the pathway isoprenoid biosynthesis; dimethylallyl diphosphate biosynthesis; dimethylallyl diphosphate from (2E)-4-hydroxy-3-methylbutenyl diphosphate: step 1/1. It participates in isoprenoid biosynthesis; isopentenyl diphosphate biosynthesis via DXP pathway; isopentenyl diphosphate from 1-deoxy-D-xylulose 5-phosphate: step 6/6. Its function is as follows. Catalyzes the conversion of 1-hydroxy-2-methyl-2-(E)-butenyl 4-diphosphate (HMBPP) into a mixture of isopentenyl diphosphate (IPP) and dimethylallyl diphosphate (DMAPP). Acts in the terminal step of the DOXP/MEP pathway for isoprenoid precursor biosynthesis. The chain is 4-hydroxy-3-methylbut-2-enyl diphosphate reductase from Yersinia pseudotuberculosis serotype IB (strain PB1/+).